We begin with the raw amino-acid sequence, 366 residues long: NADP-dependent isopropanol dehydrogenase (366 aa).

Zn(2+) contacts are provided by cysteine 43, histidine 65, glutamate 66, and aspartate 156. NADP(+) is bound by residues isoleucine 181 to valine 184, glycine 204 to arginine 206, tyrosine 224, valine 271 to tyrosine 273, and lysine 346.

This sequence belongs to the zinc-containing alcohol dehydrogenase family. In terms of assembly, homodimer. Zn(2+) serves as cofactor.

Its subcellular location is the cytoplasm. The enzyme catalyses propan-2-ol + NADP(+) = acetone + NADPH + H(+). Alcohol dehydrogenase with a preference for medium chain secondary alcohols, such as 2-butanol and isopropanol. Has very low activity with primary alcohols, such as ethanol. Under physiological conditions, the enzyme reduces aldehydes and 2-ketones to produce secondary alcohols. Is also active with acetaldehyde and propionaldehyde. This Entamoeba histolytica (strain ATCC 30459 / HM-1:IMSS / ABRM) protein is NADP-dependent isopropanol dehydrogenase.